A 1069-amino-acid chain; its full sequence is Protocadherin-8 (1069 aa).

The N-terminal stretch at 1–29 is a signal peptide; that stretch reads MSPVKRWGSPCLFPLQLFSLCWVLSVAQS. 6 consecutive Cadherin domains span residues 30-135, 136-245, 247-354, 393-497, 498-609, and 615-721; these read KTVR…APRF, PRAQ…SPAF, QGAV…APDI, QETG…APLF, TKPV…SPVL, and ANGS…VPAS. Residues 30–747 lie on the Extracellular side of the membrane; that stretch reads KTVRYSTFEE…SGPSLQWDTP (718 aa). The N-linked (GlcNAc...) asparagine glycan is linked to N616. The interval 719 to 738 is disordered; that stretch reads PASAGSPEHFRPPGSRLAPS. A helical membrane pass occupies residues 748 to 768; it reads LIVIIVLAGSCTLLLAAIIAI. The Cytoplasmic segment spans residues 769-1069; it reads ATTCNRRKKE…SPKKGTNENV (301 aa). Disordered stretches follow at residues 777–859, 905–927, and 1031–1069; these read KEVR…TGES, REAEKFSGKDSGKGDSDFNDSDS, and LSPPRPGRLPDLQEIGVPLYESPPGGRYVSPKKGTNENV. 2 stretches are compositionally biased toward basic and acidic residues: residues 780-790 and 905-920; these read RKGGALREERP and REAEKFSGKDSGKGDS. Residue S1052 is modified to Phosphoserine.

The N-terminal extracellular domain forms homophilic interactions; these interactions activate p38 MAPK via TAOK2 and trigger endocytosis. Interacts with CDH2; this interaction may lead to CDH2 cointernalization. Interacts with CDH11. Interacts with TAOK2. In terms of tissue distribution, enriched in brain relative to peripheral tissues, with low expression in the testis. Expressed in hippocampal neurons (at protein level).

It localises to the cell membrane. The protein resides in the cell projection. The protein localises to the dendrite. It is found in the presynaptic cell membrane. Its subcellular location is the postsynaptic cell membrane. Its function is as follows. Calcium-dependent cell-adhesion protein. May play a role in activity-induced synaptic reorganization underlying long term memory. Could be involved in CDH2 internalization through TAOK2/p38 MAPK pathway. In hippocampal neurons, may play a role in the down-regulation of dendritic spines, maybe through its action on CDH2 endocytosis. The protein is Protocadherin-8 (Pcdh8) of Rattus norvegicus (Rat).